Reading from the N-terminus, the 669-residue chain is Collagen alpha-1(II) chain (669 aa).

2 positions are modified to 4-hydroxyproline: Pro-3 and Pro-12. Residues Xaa-318 to Pro-327 show a composition bias toward low complexity. 3 disordered regions span residues Xaa-318 to Xaa-360, Xaa-405 to Xaa-438, and Xaa-638 to Arg-669. 4-hydroxyproline is present on residues Pro-336 and Pro-345. 2 stretches are compositionally biased toward low complexity: residues Ala-339–Xaa-360 and Xaa-405–Pro-420. Pro-413 carries the 3-hydroxyproline modification. 3 positions are modified to 4-hydroxyproline: Pro-414, Pro-420, and Pro-426. Low complexity-rich tracts occupy residues Ala-429–Xaa-438 and Xaa-638–Leu-647. Pro-648 carries the 4-hydroxyproline modification. Pro-650 is subject to 3-hydroxyproline.

This sequence belongs to the fibrillar collagen family. Homotrimers of alpha 1(II) chains. In terms of processing, contains mostly 4-hydroxyproline. Prolines at the third position of the tripeptide repeating unit (G-X-P) are 4-hydroxylated in some or all of the chains. Contains 3-hydroxyproline at a few sites. This modification occurs on the first proline residue in the sequence motif Gly-Pro-Hyp, where Hyp is 4-hydroxyproline.

It localises to the secreted. It is found in the extracellular space. The protein resides in the extracellular matrix. Its function is as follows. Type II collagen is specific for cartilaginous tissues. It is essential for the normal embryonic development of the skeleton, for linear growth and for the ability of cartilage to resist compressive forces. The polypeptide is Collagen alpha-1(II) chain (Mammut americanum (American mastodon)).